The sequence spans 369 residues: UDP-N-acetylenolpyruvoylglucosamine reductase (369 aa).

The 174-residue stretch at 29-202 (VGPIARRVIT…LEVEFALDPS (174 aa)) folds into the FAD-binding PCMH-type domain. Arg176 is a catalytic residue. Residue Ser257 is the Proton donor of the active site. Glu361 is an active-site residue.

The protein belongs to the MurB family. Requires FAD as cofactor.

It localises to the cytoplasm. The catalysed reaction is UDP-N-acetyl-alpha-D-muramate + NADP(+) = UDP-N-acetyl-3-O-(1-carboxyvinyl)-alpha-D-glucosamine + NADPH + H(+). Its pathway is cell wall biogenesis; peptidoglycan biosynthesis. Cell wall formation. This is UDP-N-acetylenolpyruvoylglucosamine reductase from Mycobacterium tuberculosis (strain ATCC 25177 / H37Ra).